Reading from the N-terminus, the 348-residue chain is Anthranilate phosphoribosyltransferase (348 aa).

5-phospho-alpha-D-ribose 1-diphosphate-binding positions include Gly-87, 90-91 (GD), Thr-95, 97-100 (NIST), 115-123 (KHGNRSASG), and Ser-127. Gly-87 is a binding site for anthranilate. Ser-99 is a binding site for Mg(2+). Asn-118 serves as a coordination point for anthranilate. Arg-173 is a binding site for anthranilate. Mg(2+)-binding residues include Asp-232 and Glu-233.

The protein belongs to the anthranilate phosphoribosyltransferase family. In terms of assembly, homodimer. Mg(2+) serves as cofactor.

The enzyme catalyses N-(5-phospho-beta-D-ribosyl)anthranilate + diphosphate = 5-phospho-alpha-D-ribose 1-diphosphate + anthranilate. It participates in amino-acid biosynthesis; L-tryptophan biosynthesis; L-tryptophan from chorismate: step 2/5. Functionally, catalyzes the transfer of the phosphoribosyl group of 5-phosphorylribose-1-pyrophosphate (PRPP) to anthranilate to yield N-(5'-phosphoribosyl)-anthranilate (PRA). The protein is Anthranilate phosphoribosyltransferase of Synechococcus sp. (strain WH7803).